A 193-amino-acid chain; its full sequence is Spermatogenesis-associated protein 3 (193 aa).

The span at M1–N16 shows a compositional bias: basic residues. The segment at M1–K92 is disordered. Positions S17 to P35 are enriched in low complexity. The segment covering P36–P48 has biased composition (pro residues).

Strongly expressed in testis. Faintly expressed in epididymis, ovary, spleen, kidney, lung, heart, brain, epididymis, liver and skeletal muscle.

It is found in the cell projection. It localises to the cilium. The protein localises to the flagellum. The sequence is that of Spermatogenesis-associated protein 3 (Spata3) from Mus musculus (Mouse).